The sequence spans 161 residues: Small ribosomal subunit protein uS9 (161 aa).

The protein belongs to the universal ribosomal protein uS9 family.

The sequence is that of Small ribosomal subunit protein uS9 from Methylobacterium radiotolerans (strain ATCC 27329 / DSM 1819 / JCM 2831 / NBRC 15690 / NCIMB 10815 / 0-1).